The primary structure comprises 197 residues: CASP-like protein 1B2 (197 aa).

Position 2 is an N-acetylalanine (Ala-2). The Cytoplasmic portion of the chain corresponds to Ala-2–Lys-17. Residues Leu-18–Ser-38 form a helical membrane-spanning segment. The Extracellular portion of the chain corresponds to Leu-39–Ala-69. Residues Phe-70–Leu-90 form a helical membrane-spanning segment. Over Gln-91 to Ser-106 the chain is Cytoplasmic. A helical membrane pass occupies residues Ile-107 to Phe-127. The Extracellular segment spans residues Val-128 to Ala-156. A helical membrane pass occupies residues Gly-157–Ile-177. Residues Ser-178 to Val-197 are Cytoplasmic-facing.

The protein belongs to the Casparian strip membrane proteins (CASP) family. In terms of assembly, homodimer and heterodimers.

It is found in the cell membrane. This chain is CASP-like protein 1B2, found in Arabidopsis lyrata subsp. lyrata (Lyre-leaved rock-cress).